Here is a 412-residue protein sequence, read N- to C-terminus: Peptidase T (412 aa).

Histidine 81 serves as a coordination point for Zn(2+). Aspartate 83 is a catalytic residue. Zn(2+) is bound at residue aspartate 144. Catalysis depends on glutamate 178, which acts as the Proton acceptor. Zn(2+) is bound by residues glutamate 179, aspartate 201, and histidine 383.

Belongs to the peptidase M20B family. It depends on Zn(2+) as a cofactor.

The protein localises to the cytoplasm. The enzyme catalyses Release of the N-terminal residue from a tripeptide.. Cleaves the N-terminal amino acid of tripeptides. The polypeptide is Peptidase T (Bacillus cereus (strain ZK / E33L)).